Consider the following 232-residue polypeptide: Mitochondrial import inner membrane translocase subunit Tim21 (232 aa).

The N-terminal 31 residues, 1–31 (MLPRFLWRPVLCSYRALGSPSRSLTVSYRNL), are a transit peptide targeting the mitochondrion. The helical transmembrane segment at 96-116 (FTYFIVVLIGIGVTGGLFYVV) threads the bilayer.

The protein belongs to the TIM21 family.

It localises to the mitochondrion membrane. Its function is as follows. May participate in the translocation of transit peptide-containing proteins across the mitochondrial inner membrane. The polypeptide is Mitochondrial import inner membrane translocase subunit Tim21 (timm21) (Xenopus laevis (African clawed frog)).